The chain runs to 317 residues: Transaldolase (317 aa).

Lys-132 (schiff-base intermediate with substrate) is an active-site residue.

Belongs to the transaldolase family. Type 1 subfamily. Homodimer.

The protein localises to the cytoplasm. The enzyme catalyses D-sedoheptulose 7-phosphate + D-glyceraldehyde 3-phosphate = D-erythrose 4-phosphate + beta-D-fructose 6-phosphate. The protein operates within carbohydrate degradation; pentose phosphate pathway; D-glyceraldehyde 3-phosphate and beta-D-fructose 6-phosphate from D-ribose 5-phosphate and D-xylulose 5-phosphate (non-oxidative stage): step 2/3. In terms of biological role, transaldolase is important for the balance of metabolites in the pentose-phosphate pathway. This is Transaldolase from Shewanella amazonensis (strain ATCC BAA-1098 / SB2B).